The primary structure comprises 196 residues: uncharacterized protein (196 aa).

Residues S15–T22, G68–M71, Y107, and T123–A126 contribute to the FAD site.

The protein belongs to the oxidoreductase MdaB family. The cofactor is FAD.

This is an uncharacterized protein from Schizosaccharomyces pombe (strain 972 / ATCC 24843) (Fission yeast).